We begin with the raw amino-acid sequence, 429 residues long: Adenylosuccinate synthetase (429 aa).

GTP contacts are provided by residues 12-18 (GDEGKGK) and 40-42 (GHT). The Proton acceptor role is filled by D13. Mg(2+)-binding residues include D13 and G40. IMP contacts are provided by residues 13-16 (DEGK), 38-41 (NAGH), T128, R142, Q223, T238, and R302. H41 serves as the catalytic Proton donor. 298-304 (TVTGRPR) contacts substrate. GTP is bound by residues R304, 330–332 (LLD), and 412–414 (SVG).

Belongs to the adenylosuccinate synthetase family. As to quaternary structure, homodimer. The cofactor is Mg(2+).

Its subcellular location is the cytoplasm. It catalyses the reaction IMP + L-aspartate + GTP = N(6)-(1,2-dicarboxyethyl)-AMP + GDP + phosphate + 2 H(+). It participates in purine metabolism; AMP biosynthesis via de novo pathway; AMP from IMP: step 1/2. Functionally, plays an important role in the de novo pathway of purine nucleotide biosynthesis. Catalyzes the first committed step in the biosynthesis of AMP from IMP. In Lactobacillus gasseri (strain ATCC 33323 / DSM 20243 / BCRC 14619 / CIP 102991 / JCM 1131 / KCTC 3163 / NCIMB 11718 / NCTC 13722 / AM63), this protein is Adenylosuccinate synthetase.